We begin with the raw amino-acid sequence, 45 residues long: Myotoxin-2 (45 aa).

3 disulfides stabilise this stretch: C4/C36, C11/C30, and C18/C37.

It belongs to the crotamine-myotoxin family. As to quaternary structure, monomer. As to expression, expressed by the venom gland.

The protein localises to the secreted. In terms of biological role, cationic peptide that possesses multiple functions. It acts as a cell-penetrating peptide (CPP), and as a potent voltage-gated potassium channel (Kv) inhibitor. It exhibits antimicrobial activities, hind limb paralysis, and severe muscle necrosis by a non-enzymatic mechanism. The protein is Myotoxin-2 of Crotalus viridis viridis (Prairie rattlesnake).